The chain runs to 72 residues: Cell division protein ZapB (72 aa).

A coiled-coil region spans residues 1-72 (MSSEILDQLE…RSLLGQIDNV (72 aa)).

The protein belongs to the ZapB family. Homodimer. The ends of the coiled-coil dimer bind to each other, forming polymers. Interacts with FtsZ.

The protein localises to the cytoplasm. Its function is as follows. Non-essential, abundant cell division factor that is required for proper Z-ring formation. It is recruited early to the divisome by direct interaction with FtsZ, stimulating Z-ring assembly and thereby promoting cell division earlier in the cell cycle. Its recruitment to the Z-ring requires functional FtsA or ZipA. In Actinobacillus succinogenes (strain ATCC 55618 / DSM 22257 / CCUG 43843 / 130Z), this protein is Cell division protein ZapB.